Consider the following 103-residue polypeptide: uncharacterized protein (103 aa).

The helical transmembrane segment at 38-58 (FTTLITIYVAAFYTGVIGAAV) threads the bilayer.

It is found in the membrane. This is an uncharacterized protein from Arabidopsis thaliana (Mouse-ear cress).